A 274-amino-acid polypeptide reads, in one-letter code: 2,3,4,5-tetrahydropyridine-2,6-dicarboxylate N-succinyltransferase (274 aa).

The protein belongs to the transferase hexapeptide repeat family.

It localises to the cytoplasm. The catalysed reaction is (S)-2,3,4,5-tetrahydrodipicolinate + succinyl-CoA + H2O = (S)-2-succinylamino-6-oxoheptanedioate + CoA. Its pathway is amino-acid biosynthesis; L-lysine biosynthesis via DAP pathway; LL-2,6-diaminopimelate from (S)-tetrahydrodipicolinate (succinylase route): step 1/3. The protein is 2,3,4,5-tetrahydropyridine-2,6-dicarboxylate N-succinyltransferase of Salmonella heidelberg (strain SL476).